A 472-amino-acid polypeptide reads, in one-letter code: tRNA-2-methylthio-N(6)-dimethylallyladenosine synthase (472 aa).

Residues 1 to 24 (MTGTPDVFPPATPGGTPLVALPAG) are disordered. The 118-residue stretch at 33–150 (GKLYIKTHGC…LPELIRARRE (118 aa)) folds into the MTTase N-terminal domain. 6 residues coordinate [4Fe-4S] cluster: Cys42, Cys79, Cys113, Cys187, Cys191, and Cys194. The Radical SAM core domain maps to 173–407 (RADGASAFVS…RINAHAAGIS (235 aa)). One can recognise a TRAM domain in the interval 408 to 471 (EKMVGTVQTV…TNSLRARVVA (64 aa)).

Belongs to the methylthiotransferase family. MiaB subfamily. In terms of assembly, monomer. Requires [4Fe-4S] cluster as cofactor.

It localises to the cytoplasm. It catalyses the reaction N(6)-dimethylallyladenosine(37) in tRNA + (sulfur carrier)-SH + AH2 + 2 S-adenosyl-L-methionine = 2-methylsulfanyl-N(6)-dimethylallyladenosine(37) in tRNA + (sulfur carrier)-H + 5'-deoxyadenosine + L-methionine + A + S-adenosyl-L-homocysteine + 2 H(+). Catalyzes the methylthiolation of N6-(dimethylallyl)adenosine (i(6)A), leading to the formation of 2-methylthio-N6-(dimethylallyl)adenosine (ms(2)i(6)A) at position 37 in tRNAs that read codons beginning with uridine. The polypeptide is tRNA-2-methylthio-N(6)-dimethylallyladenosine synthase (Stenotrophomonas maltophilia (strain R551-3)).